The sequence spans 245 residues: Dehydrogenase/reductase SDR family member 6 (245 aa).

Residues 16–18, D37, and D58 each bind NAD(+); that span reads QGI. R144 provides a ligand contact to substrate. Residue Y147 is the Proton acceptor of the active site. NAD(+)-binding positions include K151 and 180 to 184; that span reads VDTPS. Substrate contacts are provided by R188 and R205.

It belongs to the short-chain dehydrogenases/reductases (SDR) family. Homotetramer.

The protein localises to the cytoplasm. It carries out the reaction cis-4-hydroxy-L-proline + NAD(+) = 4-oxo-L-proline + NADH + H(+). The enzyme catalyses (R)-3-hydroxybutanoate + NAD(+) = acetoacetate + NADH + H(+). It participates in amino-acid metabolism. It functions in the pathway siderophore biosynthesis. In terms of biological role, NAD(H)-dependent dehydrogenase/reductase with a preference for cyclic substrates. Catalyzes stereoselective conversion of 4-oxo-L-proline to cis-4-hydroxy-L-proline, likely a detoxification mechanism for ketoprolines. Mediates the formation of 2,5-dihydroxybenzoate (2,5-DHBA), a siderophore that chelates free cytoplasmic iron, thereby regulating iron transport and homeostasis while protecting cells against free radical-induced oxidative stress. The iron-siderophore complex is imported into mitochondria, providing an iron source for mitochondrial metabolic processes in particular heme synthesis. May act as a 3-hydroxybutyrate dehydrogenase. The chain is Dehydrogenase/reductase SDR family member 6 (bdh2) from Aquarana catesbeiana (American bullfrog).